Here is a 500-residue protein sequence, read N- to C-terminus: Carnosic acid synthase (500 aa).

Residues 4-24 traverse the membrane as a helical segment; it reads LILLSLAFLASCVVAYSRRRP. Cys-443 contributes to the heme binding site.

The protein belongs to the cytochrome P450 family. Heme is required as a cofactor. Expressed in leaf glandular trichomes.

The protein resides in the membrane. The catalysed reaction is 11-hydroxyferruginol + 3 reduced [NADPH--hemoprotein reductase] + 3 O2 = carnosate + 3 oxidized [NADPH--hemoprotein reductase] + 4 H2O + 4 H(+). The enzyme catalyses miltiradiene + 2 reduced [NADPH--hemoprotein reductase] + 2 O2 = miltiradien-20-al + 2 oxidized [NADPH--hemoprotein reductase] + 3 H2O + 2 H(+). It catalyses the reaction ferruginol + 3 reduced [NADPH--hemoprotein reductase] + 3 O2 = pisiferate + 3 oxidized [NADPH--hemoprotein reductase] + 4 H2O + 4 H(+). The protein operates within secondary metabolite biosynthesis; terpenoid biosynthesis. Monooxygenase involved in the biosynthesis of carnosate, a potent antioxidant labdane-related diterpene natural product. Catalyzes the oxidation of 11-hydroxyferruginol to produce carnosate. Mediates the conversion of miltiradien into miltiradien-20-al. Also involved in the production of pisiferic acid and derivative products from ferruginol. The polypeptide is Carnosic acid synthase (Salvia pomifera (Apple sage)).